Consider the following 367-residue polypeptide: 3-dehydroquinate synthase (367 aa).

Residues 99–103, 123–124, Lys136, Lys145, and 163–166 contribute to the NAD(+) site; these read GVVGD, TT, and FLRT. Zn(2+) is bound by residues Glu178, His242, and His259.

The protein belongs to the sugar phosphate cyclases superfamily. Dehydroquinate synthase family. The cofactor is Co(2+). Zn(2+) serves as cofactor. NAD(+) is required as a cofactor.

Its subcellular location is the cytoplasm. It carries out the reaction 7-phospho-2-dehydro-3-deoxy-D-arabino-heptonate = 3-dehydroquinate + phosphate. The protein operates within metabolic intermediate biosynthesis; chorismate biosynthesis; chorismate from D-erythrose 4-phosphate and phosphoenolpyruvate: step 2/7. Catalyzes the conversion of 3-deoxy-D-arabino-heptulosonate 7-phosphate (DAHP) to dehydroquinate (DHQ). The protein is 3-dehydroquinate synthase of Chlorobaculum parvum (strain DSM 263 / NCIMB 8327) (Chlorobium vibrioforme subsp. thiosulfatophilum).